We begin with the raw amino-acid sequence, 402 residues long: Elongation factor Tu (402 aa).

Residues 10-212 (KPHVNIGTIG…AVDEYIPTPE (203 aa)) enclose the tr-type G domain. Residues 19 to 26 (GHVDHGKT) form a G1 region. 19 to 26 (GHVDHGKT) serves as a coordination point for GTP. Thr-26 provides a ligand contact to Mg(2+). Residues 60 to 64 (GITIA) are G2. The segment at 81–84 (DCPG) is G3. GTP-binding positions include 81–85 (DCPGH) and 136–139 (NKED). The interval 136 to 139 (NKED) is G4. A G5 region spans residues 177–179 (SAF).

This sequence belongs to the TRAFAC class translation factor GTPase superfamily. Classic translation factor GTPase family. EF-Tu/EF-1A subfamily. Monomer.

The protein resides in the cytoplasm. The catalysed reaction is GTP + H2O = GDP + phosphate + H(+). Functionally, GTP hydrolase that promotes the GTP-dependent binding of aminoacyl-tRNA to the A-site of ribosomes during protein biosynthesis. This is Elongation factor Tu from Aliarcobacter butzleri (strain RM4018) (Arcobacter butzleri).